The primary structure comprises 134 residues: Prefoldin subunit 4 (134 aa).

Ala2 is subject to N-acetylalanine. Ser125 is modified (phosphoserine).

The protein belongs to the prefoldin subunit beta family. Heterohexamer of two PFD-alpha type and four PFD-beta type subunits. Interacts with URI1; the interaction is phosphorylation-dependent and occurs in a growth-dependent manner.

The protein localises to the nucleus. Its subcellular location is the cytoplasm. It localises to the mitochondrion. Functionally, binds specifically to cytosolic chaperonin (c-CPN) and transfers target proteins to it. Binds to nascent polypeptide chain and promotes folding in an environment in which there are many competing pathways for nonnative proteins. The protein is Prefoldin subunit 4 (PFDN4) of Bos taurus (Bovine).